Reading from the N-terminus, the 383-residue chain is Odorant receptor 94b (383 aa).

The Cytoplasmic portion of the chain corresponds to 1–41; sequence MESTNRLSAIQTLLVIQRWIGLLKWENEGEDGVLTWLKRIY. The helical transmembrane segment at 42–62 threads the bilayer; sequence PFVLHLPLTFTYIALMWYEAI. At 63-70 the chain is on the extracellular side; that stretch reads TSSDFEEA. The helical transmembrane segment at 71–91 threads the bilayer; sequence GQVLYMSITELALVTKLLNIW. At 92–130 the chain is on the cytoplasmic side; sequence YRRHEAASLIHELQHDPAFNLRNSEEIKFWQQNQRNFKR. The helical transmembrane segment at 131 to 151 threads the bilayer; it reads IFYWYIWGSLFVAVMGYISVF. Topologically, residues 152 to 174 are extracellular; that stretch reads FQEDYELPFGYYVPFEWRTRERY. A helical transmembrane segment spans residues 175–195; sequence FYAWGYNVVAMTLCCLSNILL. The Cytoplasmic portion of the chain corresponds to 196-250; it reads DTLGCYFMFHIASLFRLLGMRLEALKNAAEEKARPELRRIFQLHTKVRRLTRECE. A helical membrane pass occupies residues 251-271; sequence VLVSPYVLSQVVFSAFIICFS. Topologically, residues 272-284 are extracellular; that stretch reads AYRLVHMGFKQRP. A helical membrane pass occupies residues 285–305; the sequence is GLFVTTVQFVAVMIVQIFLPC. Residues 306–358 are Cytoplasmic-facing; that stretch reads YYGNELTFHANALTNSVFGTNWLEYSVGTRKLLNCYMEFLKRPVKVRAGVFFE. Residues 359–379 traverse the membrane as a helical segment; it reads IGLPIFVKTINNAYSFFALLL. At 380 to 383 the chain is on the extracellular side; it reads KISK.

Belongs to the insect chemoreceptor superfamily. Heteromeric odorant receptor channel (TC 1.A.69) family. Or2a subfamily. Interacts with Orco. Complexes exist early in the endomembrane system in olfactory sensory neurons (OSNs), coupling these complexes to the conserved ciliary trafficking pathway.

It localises to the cell membrane. Its function is as follows. Odorant receptor which mediates acceptance or avoidance behavior, depending on its substrates. The odorant receptor repertoire encodes a large collection of odor stimuli that vary widely in identity, intensity, and duration. May form a complex with Orco to form odorant-sensing units, providing sensitive and prolonged odorant signaling and calcium permeability. In Drosophila melanogaster (Fruit fly), this protein is Odorant receptor 94b (Or94b).